Consider the following 396-residue polypeptide: Cytochrome P450 121 (396 aa).

A heme-binding site is contributed by cysteine 345.

The protein belongs to the cytochrome P450 family. Heme is required as a cofactor.

It localises to the cytoplasm. The sequence is that of Cytochrome P450 121 (cyp121) from Mycobacterium bovis (strain ATCC BAA-935 / AF2122/97).